A 482-amino-acid chain; its full sequence is Signal recognition particle protein (482 aa).

Residues 107–114, 189–193, and 247–250 each bind GTP; these read GLQGTGKT, DTAGR, and TKLD. Disordered stretches follow at residues 380–413 and 452–482; these read MTTE…TDVS and FGGQ…FGQL. Positions 452 to 468 are enriched in gly residues; that stretch reads FGGQPGPGFRGYRGGGG. Over residues 469-482 the composition is skewed to basic residues; it reads KPKKKKKKKGFGQL.

Belongs to the GTP-binding SRP family. SRP54 subfamily. Part of the signal recognition particle protein translocation system, which is composed of SRP and FtsY.

The protein localises to the cytoplasm. The catalysed reaction is GTP + H2O = GDP + phosphate + H(+). Involved in targeting and insertion of nascent membrane proteins into the cytoplasmic membrane. Binds to the hydrophobic signal sequence of the ribosome-nascent chain (RNC) as it emerges from the ribosomes. The SRP-RNC complex is then targeted to the cytoplasmic membrane where it interacts with the SRP receptor FtsY. This is Signal recognition particle protein from Synechocystis sp. (strain ATCC 27184 / PCC 6803 / Kazusa).